The following is a 119-amino-acid chain: Phytosulfokines 2 (119 aa).

The first 34 residues, Met1 to Ala34, serve as a signal peptide directing secretion. A propeptide spanning residues Ala35 to Asp109 is cleaved from the precursor. 2 positions are modified to sulfotyrosine: Tyr110 and Tyr112. Positions His115–Pro119 are excised as a propeptide.

This sequence belongs to the phytosulfokine family. Sulfation is important for activity and for the binding to a putative membrane receptor. In terms of processing, PSK-alpha is produced by endopeptidase digestion. PSK-beta is produced from PSK-alpha by exopeptidase digestion.

The protein localises to the secreted. In terms of biological role, promotes plant cell differentiation, organogenesis and somatic embryogenesis as well as cell proliferation. This chain is Phytosulfokines 2 (PSK2), found in Oryza sativa subsp. japonica (Rice).